The chain runs to 1145 residues: Structure-specific endonuclease subunit SLX4 (1145 aa).

A disordered region spans residues 48 to 108; that stretch reads ADIPVQPDPP…GKSKQQPSIS (61 aa). A coiled-coil region spans residues 321 to 372; that stretch reads ERETQKCRQLRQQHELVYAELERYYGDPQKLEEEVMQELDELEKLVADNMIE. The span at 382-393 shows a compositional bias: low complexity; the sequence is EAESSSTGSSPS. Disordered stretches follow at residues 382 to 442, 613 to 634, and 666 to 689; these read EAES…EDEP, QSSHQLGILTTPNDTEHSSSFS, and SAEKRVSPAASPYKQSDASVDLTQ. Over residues 395-410 the composition is skewed to basic and acidic residues; the sequence is EPPDKRPKMTMEDKEN. 3 stretches are compositionally biased toward polar residues: residues 411-430, 613-633, and 678-689; these read LQPTTSKASLTVPAQSTRCT, QSSHQLGILTTPNDTEHSSSF, and YKQSDASVDLTQ.

This sequence belongs to the SLX4 family. Forms a heterodimer with SLX1. Interacts with mei-9; catalytic subunit of the MEI-9-ERCC1 endonuclease.

It localises to the nucleus. Regulatory subunit that interacts with and increases the activity of different structure-specific endonucleases. Has several distinct roles in protecting genome stability by resolving diverse forms of deleterious DNA structures originating from replication and recombination intermediates and from DNA damage. Component of the SLX1-SLX4 structure-specific endonuclease that resolves DNA secondary structures generated during DNA repair and recombination. Has endonuclease activity towards branched DNA substrates, introducing single-strand cuts in duplex DNA close to junctions with ss-DNA. Interacts with the structure-specific MEI-9-ERCC1 endonuclease to generate meiotic crossovers. The chain is Structure-specific endonuclease subunit SLX4 (mus312) from Drosophila melanogaster (Fruit fly).